The primary structure comprises 268 residues: Very-long-chain aldehyde decarbonylase GL1-8 (268 aa).

4 consecutive transmembrane segments (helical) span residues 26–46 (IGTFLLHESVFFLSGLPSLLF), 70–90 (CVVRLVLYHVCVNLPLTILSY), 107–127 (WTVVVSQVLFFFVLEDFIFYW), and 164–184 (ILFLGFATVAGPALTGPHLFT). Positions 114-249 (VLFFFVLEDF…FIYMDWLFGT (136 aa)) constitute a Fatty acid hydroxylase domain.

It belongs to the sterol desaturase family. As to quaternary structure, homodimer.

It is found in the endoplasmic reticulum membrane. It catalyses the reaction a long-chain fatty aldehyde + 2 NADPH + O2 + H(+) = a long-chain alkane + formate + 2 NADP(+) + H2O. Functionally, aldehyde decarbonylase involved in the conversion of aldehydes to alkanes. Core component of a very-long-chain alkane synthesis complex. The chain is Very-long-chain aldehyde decarbonylase GL1-8 from Oryza sativa subsp. indica (Rice).